Reading from the N-terminus, the 147-residue chain is Large ribosomal subunit protein uL13 (147 aa).

The protein belongs to the universal ribosomal protein uL13 family. Part of the 50S ribosomal subunit.

Its function is as follows. This protein is one of the early assembly proteins of the 50S ribosomal subunit, although it is not seen to bind rRNA by itself. It is important during the early stages of 50S assembly. The sequence is that of Large ribosomal subunit protein uL13 from Arthrobacter sp. (strain FB24).